A 340-amino-acid polypeptide reads, in one-letter code: Ketol-acid reductoisomerase (NADP(+)) (340 aa).

Positions 3–182 (VQMEYEKDVK…GAARVGLLET (180 aa)) constitute a KARI N-terminal Rossmann domain. Residues 26 to 29 (YGSQ), arginine 49, serine 53, and 83 to 86 (DEIQ) each bind NADP(+). Histidine 108 is an active-site residue. Glycine 134 is a binding site for NADP(+). The region spanning 183 to 328 (TYKEETEEDL…AELRKAMPFV (146 aa)) is the KARI C-terminal knotted domain. Mg(2+) is bound by residues aspartate 191, glutamate 195, glutamate 227, and glutamate 231. Serine 252 serves as a coordination point for substrate.

The protein belongs to the ketol-acid reductoisomerase family. Requires Mg(2+) as cofactor.

The enzyme catalyses (2R)-2,3-dihydroxy-3-methylbutanoate + NADP(+) = (2S)-2-acetolactate + NADPH + H(+). The catalysed reaction is (2R,3R)-2,3-dihydroxy-3-methylpentanoate + NADP(+) = (S)-2-ethyl-2-hydroxy-3-oxobutanoate + NADPH + H(+). It functions in the pathway amino-acid biosynthesis; L-isoleucine biosynthesis; L-isoleucine from 2-oxobutanoate: step 2/4. It participates in amino-acid biosynthesis; L-valine biosynthesis; L-valine from pyruvate: step 2/4. In terms of biological role, involved in the biosynthesis of branched-chain amino acids (BCAA). Catalyzes an alkyl-migration followed by a ketol-acid reduction of (S)-2-acetolactate (S2AL) to yield (R)-2,3-dihydroxy-isovalerate. In the isomerase reaction, S2AL is rearranged via a Mg-dependent methyl migration to produce 3-hydroxy-3-methyl-2-ketobutyrate (HMKB). In the reductase reaction, this 2-ketoacid undergoes a metal-dependent reduction by NADPH to yield (R)-2,3-dihydroxy-isovalerate. The chain is Ketol-acid reductoisomerase (NADP(+)) from Streptococcus pneumoniae (strain CGSP14).